Consider the following 328-residue polypeptide: Malate dehydrogenase (328 aa).

NAD(+) is bound at residue 12–18; sequence GAAGQIA. The substrate site is built by Arg93 and Arg99. NAD(+) is bound by residues Asn106, Gln113, and 130-132; that span reads VGN. Residues Asn132 and Arg163 each contribute to the substrate site. His188 (proton acceptor) is an active-site residue.

The protein belongs to the LDH/MDH superfamily. MDH type 2 family.

It carries out the reaction (S)-malate + NAD(+) = oxaloacetate + NADH + H(+). In terms of biological role, catalyzes the reversible oxidation of malate to oxaloacetate. This is Malate dehydrogenase from Burkholderia cenocepacia (strain HI2424).